The chain runs to 135 residues: Protein NrdI (135 aa).

The protein belongs to the NrdI family.

Functionally, probably involved in ribonucleotide reductase function. This is Protein NrdI from Pectobacterium carotovorum subsp. carotovorum (strain PC1).